A 207-amino-acid polypeptide reads, in one-letter code: MAETENVREIRDENYQSLIPMDEYLAAGVHIGTQQKTEDMKKFIYRVRSDGLYVLDVQSTDERIRAAAKFLSRYDPANVLVVCARQYGQHPAEMFARAIGARHIVGRFIPGTLTNPVYMFFAEPDVVVVTDPIGDAQAVTEAISIGVPVVAMCDTNNMTSNIDLVIPTNNKGRKALALVYWLLAREVSRERNEQGFSYTVNDFESEI.

This sequence belongs to the universal ribosomal protein uS2 family.

In Methanocella arvoryzae (strain DSM 22066 / NBRC 105507 / MRE50), this protein is Small ribosomal subunit protein uS2.